Reading from the N-terminus, the 419-residue chain is Peptide chain release factor subunit 1 (419 aa).

This sequence belongs to the eukaryotic release factor 1 family. In terms of assembly, heterodimer of two subunits, one of which binds GTP.

It is found in the cytoplasm. Directs the termination of nascent peptide synthesis (translation) in response to the termination codons UAA, UAG and UGA. The sequence is that of Peptide chain release factor subunit 1 from Methanococcus maripaludis (strain DSM 14266 / JCM 13030 / NBRC 101832 / S2 / LL).